The chain runs to 264 residues: Short-chain dehydrogenase/reductase malC (264 aa).

The helical transmembrane segment at Gly13–Glu35 threads the bilayer. Positions 22, 23, 25, 45, 46, 49, 75, 88, 130, 202, and 204 each coordinate NADP(+). The N-linked (GlcNAc...) asparagine glycan is linked to Asn249.

It belongs to the short-chain dehydrogenases/reductases (SDR) family.

It is found in the membrane. The catalysed reaction is 1-hydroxy-3-{[2-(1,1-dimethylallyl)-indol-3-yl]methyl}-6H,7H,8H-5lambda(5)-pyrrolo[1,2-a]pyrazine + NADPH + H(+) = 1-hydroxy-3-{[2-(1,1-dimethylallyl)-indol-3-yl]methyl}-4H,6H,7H,8H-pyrrolo[1,2-a]pyrazine + NADP(+). It carries out the reaction 1-hydroxy-3-{[2-(1,1-dimethylallyl)-indol-3-yl]methyl}-4H,6H,7H,8H-pyrrolo[1,2-a]pyrazine = (+)-premalbrancheamide. The protein operates within alkaloid biosynthesis. Its function is as follows. Short-chain dehydrogenase/reductase; part of the gene cluster that mediates the biosynthesis of malbrancheamide, a dichlorinated fungal indole alkaloid that belongs to a family of natural products containing a characteristic bicyclo[2.2.2]diazaoctane core. The first step of malbrancheamide biosynthesis involves coupling of L-proline and L-tryptophan by malG, a bimodular NRPS, to produce L-Pro-L-Trp aldehyde through reductive offloading. This compound undergoes spontaneous cyclization and dehydration to give a dienamine which is reverse prenylated at C-2 by malE. The other prenyltransferase present in the cluster, malB, displays modest activity, suggesting that may be a redundant gene in the pathway. Subsequently, a [4+2] Diels-Alder cyclo-addition catalyzed by the bifunctional enzyme malC forms the characteristic bicyclo[2.2.2]diazaoctane ring of premalbrancheamid. The first reaction catalyzed is a NADPH-dependent reduction reaction in which the nicotinamide cofactor is a stoichiometric reagent. Either NADH or NADPH is effective as a cofactor. NADP(+) is required for stereocontrolled formation of premalbrancheamide, however it does not appear to be required as a formal stoichiometric reagent because the second reaction performed by malC, the [4+2] cycloaddition, is a balanced chemical reaction without requirement for hydride transfer to balance the reaction. Finally, the flavin-dependent halogenase malA catalyzes the iterative dichlorination of the indole ring of premalbrancheamide to yield C-9 monochlorinated malbrancheamide B, C-8 monochlorinated isomalbrancheamide B, and dichlorinated malbrancheamide. MalA is also able to brominate premalbrancheamide at C-9 to yield malbrancheamide C, and, to a lesser extend, at C-8 to yield isomalbrancheamide C. Finally, malA can brominate C-9 monochlorinated malbrancheamide B at C-8 to yield malbrancheamide D, or C-8 monochlorinated isomalbrancheamide B at C-9 to produce isomalbrancheamide D. The sequence is that of Short-chain dehydrogenase/reductase malC from Malbranchea aurantiaca.